Consider the following 678-residue polypeptide: MADSNMDAGTTTSEMVAEEVSLFSTTDVILFSLIVGVMTYWFLFRKKKEEVPEFTKIQTTTSSVKDRSFVEKMKKTGRNIIVFYGSQTGTAEEFANRLSKDAHRYGMRGMAADPEEYDLADLSSLPEIEKALAIFCMATYGEGDPTDNAQDFYDWLQETDVDLSGVKYAVFALGNKTYEHFNAMGKYVDKRLEQLGAQRIFDLGLGDDDGNLEEDFITWREQFWPAVCEHFGVEATGEESSIRQYELMVHTDMDMAKVYTGEMGRLKSYENQKPPFDAKNPFLAVVTTNRKLNQGTERHLMHLELDISDSKIRYESGDHVAVYPANDSALVNQLGEILGADLDIIMSLNNLDEESNKKHPFPCPTSYRTALTYYLDITNPPRTNVLYELAQYASEPTEHEQLRKMASSSGEGKELYLRWVLEARRHILAILQDYPSLRPPIDHLCELLPRLQARYYSIASSSKVHPNSVHICAVAVEYETKTGRINKGVATSWLRAKEPAGENGGRALVPMYVRKSQFRLPFKATTPVIMVGPGTGVAPFIGFIQERAWLRQQGKEVGETLLYYGCRRSDEDYLYREELAGFHKDGALTQLNVAFSREQPQKVYVQHLLKKDKEHLWKLIHEGGAHIYVCGDARNMARDVQNTFYDIVAEQGAMEHAQAVDYVKKLMTKGRYSLDVWS.

Over 1-21 (MADSNMDAGTTTSEMVAEEVS) the chain is Lumenal. The chain crosses the membrane as a helical span at residues 22–42 (LFSTTDVILFSLIVGVMTYWF). Residues 43-678 (LFRKKKEEVP…KGRYSLDVWS (636 aa)) lie on the Cytoplasmic side of the membrane. Position 63 is a phosphoserine (S63). In terms of domain architecture, Flavodoxin-like spans 80–224 (IIVFYGSQTG…DFITWREQFW (145 aa)). Residues 86–91 (SQTGTA), 138–141 (ATYG), 173–182 (LGNKTYEHFN), and D208 contribute to the FMN site. The FAD-binding FR-type domain occupies 279-521 (KNPFLAVVTT…YVRKSQFRLP (243 aa)). R298 contacts NADP(+). Residues R424, 454 to 457 (RYYS), 472 to 474 (CAV), Y478, and 488 to 491 (GVAT) each bind FAD. Residues T535, 596–597 (SR), 602–606 (KVYVQ), and D639 each bind NADP(+). FAD is bound at residue W677.

The protein belongs to the NADPH--cytochrome P450 reductase family. This sequence in the N-terminal section; belongs to the flavodoxin family. In the C-terminal section; belongs to the flavoprotein pyridine nucleotide cytochrome reductase family. It depends on FAD as a cofactor. FMN is required as a cofactor.

Its subcellular location is the endoplasmic reticulum membrane. It carries out the reaction 2 oxidized [cytochrome P450] + NADPH = 2 reduced [cytochrome P450] + NADP(+) + H(+). This enzyme is required for electron transfer from NADP to cytochrome P450 in microsomes. It can also provide electron transfer to heme oxygenase and cytochrome B5. The sequence is that of NADPH--cytochrome P450 reductase from Bos taurus (Bovine).